The sequence spans 179 residues: Transcription termination/antitermination protein NusG (179 aa).

The KOW domain occupies 130–157; the sequence is EGDVVQIIDGAFMGQEGRVVEIENNKVK.

It belongs to the NusG family.

Functionally, participates in transcription elongation, termination and antitermination. The sequence is that of Transcription termination/antitermination protein NusG from Streptococcus pyogenes serotype M1.